Reading from the N-terminus, the 239-residue chain is Dephospho-CoA kinase (239 aa).

One can recognise a DPCK domain in the interval 3–206; the sequence is IIGLTGSIAS…GGEGGEPAAG (204 aa). Position 11 to 16 (11 to 16) interacts with ATP; sequence ASGKST. The tract at residues 197–239 is disordered; it reads GGEGGEPAAGSSAHHGAGSVDPGAGPCDGPGAAPEAERRGGDR. The segment covering 204–230 has biased composition (low complexity); the sequence is AAGSSAHHGAGSVDPGAGPCDGPGAAP.

It belongs to the CoaE family.

It is found in the cytoplasm. It carries out the reaction 3'-dephospho-CoA + ATP = ADP + CoA + H(+). It participates in cofactor biosynthesis; coenzyme A biosynthesis; CoA from (R)-pantothenate: step 5/5. Its function is as follows. Catalyzes the phosphorylation of the 3'-hydroxyl group of dephosphocoenzyme A to form coenzyme A. The sequence is that of Dephospho-CoA kinase from Symbiobacterium thermophilum (strain DSM 24528 / JCM 14929 / IAM 14863 / T).